Here is a 262-residue protein sequence, read N- to C-terminus: Hydroxyethylthiazole kinase (262 aa).

Met50 contributes to the substrate binding site. Residues Arg125 and Thr171 each coordinate ATP. A substrate-binding site is contributed by Gly198.

Belongs to the Thz kinase family. Requires Mg(2+) as cofactor.

The catalysed reaction is 5-(2-hydroxyethyl)-4-methylthiazole + ATP = 4-methyl-5-(2-phosphooxyethyl)-thiazole + ADP + H(+). It participates in cofactor biosynthesis; thiamine diphosphate biosynthesis; 4-methyl-5-(2-phosphoethyl)-thiazole from 5-(2-hydroxyethyl)-4-methylthiazole: step 1/1. In terms of biological role, catalyzes the phosphorylation of the hydroxyl group of 4-methyl-5-beta-hydroxyethylthiazole (THZ). The chain is Hydroxyethylthiazole kinase from Shigella flexneri serotype 5b (strain 8401).